Reading from the N-terminus, the 88-residue chain is Small ribosomal subunit protein bS16 (88 aa).

It belongs to the bacterial ribosomal protein bS16 family.

The chain is Small ribosomal subunit protein bS16 from Geobacter sulfurreducens (strain ATCC 51573 / DSM 12127 / PCA).